The following is a 208-amino-acid chain: N-(5'-phosphoribosyl)anthranilate isomerase (208 aa).

This sequence belongs to the TrpF family.

The enzyme catalyses N-(5-phospho-beta-D-ribosyl)anthranilate = 1-(2-carboxyphenylamino)-1-deoxy-D-ribulose 5-phosphate. Its pathway is amino-acid biosynthesis; L-tryptophan biosynthesis; L-tryptophan from chorismate: step 3/5. The protein is N-(5'-phosphoribosyl)anthranilate isomerase of Neisseria gonorrhoeae (strain NCCP11945).